The sequence spans 181 residues: Bifunctional protein PyrR (181 aa).

The PRPP-binding signature appears at 100 to 112 (VVLVDDVIYTGRT).

This sequence belongs to the purine/pyrimidine phosphoribosyltransferase family. PyrR subfamily. In terms of assembly, homodimer and homohexamer; in equilibrium.

It catalyses the reaction UMP + diphosphate = 5-phospho-alpha-D-ribose 1-diphosphate + uracil. In terms of biological role, regulates transcriptional attenuation of the pyrimidine nucleotide (pyr) operon by binding in a uridine-dependent manner to specific sites on pyr mRNA. This disrupts an antiterminator hairpin in the RNA and favors formation of a downstream transcription terminator, leading to a reduced expression of downstream genes. Its function is as follows. Also displays a weak uracil phosphoribosyltransferase activity which is not physiologically significant. The chain is Bifunctional protein PyrR from Pelotomaculum thermopropionicum (strain DSM 13744 / JCM 10971 / SI).